A 207-amino-acid polypeptide reads, in one-letter code: SPRY domain-containing protein 4 (207 aa).

Residues 12–207 (YRWGTKRWGV…HSGLEVPKGL (196 aa)) form the B30.2/SPRY domain. Residues Lys53 and Lys130 each carry the N6-acetyllysine modification. Residue Lys139 is modified to N6-succinyllysine.

In Mus musculus (Mouse), this protein is SPRY domain-containing protein 4 (Spryd4).